Reading from the N-terminus, the 623-residue chain is AFI1-like protein C776.06c (623 aa).

Positions 5 to 204 constitute a uDENN domain; that stretch reads DYLLTAIFDP…IDNIPKPGSE (200 aa). The cDENN domain maps to 248–386; sequence ISNLINTFID…SDATTTMDTK (139 aa). Residues 388 to 476 enclose the dDENN domain; the sequence is LFNNTSPFTP…WSWDNDDEKV (89 aa).

The protein belongs to the AFI1/mesA family.

It is found in the cytoplasm. It localises to the cell cortex. The protein localises to the nucleus. Functionally, involved in polarity establishment. The chain is AFI1-like protein C776.06c from Schizosaccharomyces pombe (strain 972 / ATCC 24843) (Fission yeast).